The chain runs to 432 residues: Glutamine synthetase, chloroplastic (432 aa).

Positions 79–159 constitute a GS beta-grasp domain; sequence IIAEYIWIGG…VICDTYTPQG (81 aa). The 267-residue stretch at 166–432 folds into the GS catalytic domain; the sequence is KRHKAAQIFS…LAAQKLSLNV (267 aa).

Belongs to the glutamine synthetase family. Homooctamer.

The protein resides in the plastid. The protein localises to the chloroplast. The enzyme catalyses L-glutamate + NH4(+) + ATP = L-glutamine + ADP + phosphate + H(+). In terms of biological role, the light-modulated chloroplast enzyme, encoded by a nuclear gene and expressed primarily in leaves, is responsible for the reassimilation of the ammonia generated by photorespiration. The chain is Glutamine synthetase, chloroplastic (GLN2) from Daucus carota (Wild carrot).